A 102-amino-acid chain; its full sequence is Cytochrome b (102 aa).

A run of 3 helical transmembrane segments spans residues 1–21, 45–66, and 81–101; these read FGSL…FLAM, WLMR…FLHI, and WNIG…GYVL. Positions 51 and 65 each coordinate heme b.

This sequence belongs to the cytochrome b family. As to quaternary structure, the cytochrome bc1 complex contains 3 respiratory subunits (MT-CYB, CYC1 and UQCRFS1), 2 core proteins (UQCRC1 and UQCRC2) and probably 6 low-molecular weight proteins. Heme b serves as cofactor.

The protein localises to the mitochondrion inner membrane. Its function is as follows. Component of the ubiquinol-cytochrome c reductase complex (complex III or cytochrome b-c1 complex) that is part of the mitochondrial respiratory chain. The b-c1 complex mediates electron transfer from ubiquinol to cytochrome c. Contributes to the generation of a proton gradient across the mitochondrial membrane that is then used for ATP synthesis. The chain is Cytochrome b (mt-cyb) from Ambystoma tigrinum (Eastern tiger salamander).